The primary structure comprises 421 residues: Zinc finger protein Pegasus (421 aa).

The tract at residues 35 to 55 (GDKEAETLQGAGTEGDQNGLD) is disordered. C2H2-type zinc fingers lie at residues 82–104 (LKCRYCNYASKGTARLIEHIRIH), 110–132 (HRCHLCPFASAYERHLEAHMRSH), and 138–161 (YKCELCSFRCSDRSNLSHHRRRKH). Positions 229-238 (SMTKSSQTSG) are enriched in polar residues. Disordered stretches follow at residues 229 to 249 (SMTKSSQTSGLPRDPQDLMVD) and 292 to 358 (QPAT…PTLP). A compositionally biased stretch (low complexity) spans 292-313 (QPATPAVVSSVSASIAQSSSPT). The span at 339–351 (HTSTPSISNSQPS) shows a compositional bias: polar residues. 2 consecutive C2H2-type zinc fingers follow at residues 366–388 (HHCQHCDMYFADNILYTIHMGCH) and 394–418 (FQCNICGCKCKNKYDFACHFARGQH).

This sequence belongs to the Ikaros C2H2-type zinc-finger protein family. In terms of assembly, probably self-associates.

The protein resides in the nucleus. Its function is as follows. Transcriptional repressor that binds the core 5'GNNTGTNG-3' DNA consensus sequence. The sequence is that of Zinc finger protein Pegasus (IKZF5) from Gallus gallus (Chicken).